The following is a 130-amino-acid chain: Holo-[acyl-carrier-protein] synthase (130 aa).

The Mg(2+) site is built by Asp8 and Glu62.

This sequence belongs to the P-Pant transferase superfamily. AcpS family. It depends on Mg(2+) as a cofactor.

It is found in the cytoplasm. It catalyses the reaction apo-[ACP] + CoA = holo-[ACP] + adenosine 3',5'-bisphosphate + H(+). Transfers the 4'-phosphopantetheine moiety from coenzyme A to a Ser of acyl-carrier-protein. The polypeptide is Holo-[acyl-carrier-protein] synthase (Variovorax paradoxus (strain S110)).